Reading from the N-terminus, the 47-residue chain is PhoP/PhoQ regulator MgrB (47 aa).

The chain crosses the membrane as a helical span at residues 6–26; it reads WVALVVVVLACLLLWAQVFNM.

Belongs to the MgrB family. In terms of assembly, may form homooligomers. Probably interacts with the periplasmic domain of PhoQ.

Its subcellular location is the cell inner membrane. In terms of biological role, phoP-regulated transcription is redox-sensitive, being activated when the periplasm becomes more reducing. MgrB acts between DsbA/DsbB and PhoP/PhoQ in this pathway. Represses PhoP/PhoQ signaling, possibly by binding to the periplasmic domain of PhoQ, altering its activity and that of downstream effector PhoP. The sequence is that of PhoP/PhoQ regulator MgrB from Escherichia coli O127:H6 (strain E2348/69 / EPEC).